The chain runs to 227 residues: Isopentenyl-diphosphate Delta-isomerase 1 (227 aa).

Position 36 (K36) interacts with substrate. H40 and H51 together coordinate Mg(2+). A Nudix hydrolase domain is found at 49 to 199 (LLHRAFSVFL…EIKITPWFKI (151 aa)). The substrate site is built by R70 and K74. Residue C86 is part of the active site. S87 contributes to the substrate binding site. Mg(2+)-binding residues include E146 and E148. E148 is an active-site residue. K176 is subject to N6-acetyllysine. Positions 225 to 227 (YRM) match the Microbody targeting signal motif.

This sequence belongs to the IPP isomerase type 1 family. In terms of assembly, monomer. The cofactor is Mg(2+).

Its subcellular location is the peroxisome. It catalyses the reaction isopentenyl diphosphate = dimethylallyl diphosphate. The protein operates within isoprenoid biosynthesis; dimethylallyl diphosphate biosynthesis; dimethylallyl diphosphate from isopentenyl diphosphate: step 1/1. Its function is as follows. Catalyzes the 1,3-allylic rearrangement of the homoallylic substrate isopentenyl (IPP) to its highly electrophilic allylic isomer, dimethylallyl diphosphate (DMAPP). The chain is Isopentenyl-diphosphate Delta-isomerase 1 (IDI1) from Homo sapiens (Human).